The primary structure comprises 434 residues: Histidinol dehydrogenase (434 aa).

Residues Tyr-130, Gln-191, and Asn-214 each coordinate NAD(+). Residues Ser-237, Gln-259, and His-262 each coordinate substrate. The Zn(2+) site is built by Gln-259 and His-262. Active-site proton acceptor residues include Glu-327 and His-328. Positions 328, 361, 415, and 420 each coordinate substrate. Asp-361 contributes to the Zn(2+) binding site. Residue His-420 participates in Zn(2+) binding.

Belongs to the histidinol dehydrogenase family. The cofactor is Zn(2+).

It carries out the reaction L-histidinol + 2 NAD(+) + H2O = L-histidine + 2 NADH + 3 H(+). Its pathway is amino-acid biosynthesis; L-histidine biosynthesis; L-histidine from 5-phospho-alpha-D-ribose 1-diphosphate: step 9/9. In terms of biological role, catalyzes the sequential NAD-dependent oxidations of L-histidinol to L-histidinaldehyde and then to L-histidine. This Cereibacter sphaeroides (strain ATCC 17023 / DSM 158 / JCM 6121 / CCUG 31486 / LMG 2827 / NBRC 12203 / NCIMB 8253 / ATH 2.4.1.) (Rhodobacter sphaeroides) protein is Histidinol dehydrogenase.